Here is a 531-residue protein sequence, read N- to C-terminus: Peptide chain release factor 3 (531 aa).

The 270-residue stretch at 13–282 (SKRRTFAIIS…GLTQWAPSPM (270 aa)) folds into the tr-type G domain. Residues 22-29 (SHPDAGKT), 90-94 (DTPGH), and 144-147 (NKLD) each bind GTP.

It belongs to the TRAFAC class translation factor GTPase superfamily. Classic translation factor GTPase family. PrfC subfamily.

Its subcellular location is the cytoplasm. Functionally, increases the formation of ribosomal termination complexes and stimulates activities of RF-1 and RF-2. It binds guanine nucleotides and has strong preference for UGA stop codons. It may interact directly with the ribosome. The stimulation of RF-1 and RF-2 is significantly reduced by GTP and GDP, but not by GMP. The protein is Peptide chain release factor 3 of Vibrio cholerae serotype O1 (strain ATCC 39315 / El Tor Inaba N16961).